Reading from the N-terminus, the 520-residue chain is Amine oxidase [flavin-containing] B (520 aa).

Position 2 is an N-acetylserine (serine 2). The Cytoplasmic portion of the chain corresponds to 2–489 (SSKCDVVVVG…TFLERHLPSV (488 aa)). At lysine 52 the chain carries N6-acetyllysine. S-8alpha-FAD cysteine is present on cysteine 397. A helical; Anchor for type IV membrane protein membrane pass occupies residues 490-516 (PGLLRLIGLTAIFSATALGYLAHKRGL). The Mitochondrial intermembrane portion of the chain corresponds to 517–520 (LVRV).

The protein belongs to the flavin monoamine oxidase family. As to quaternary structure, monomer, homo- or heterodimer (containing two subunits of similar size). Each subunit contains a covalently bound flavin. Enzymatically active as monomer. FAD serves as cofactor.

Its subcellular location is the mitochondrion outer membrane. The enzyme catalyses a secondary aliphatic amine + O2 + H2O = a primary amine + an aldehyde + H2O2. The catalysed reaction is (R)-adrenaline + O2 + H2O = (R)-3,4-dihydroxymandelaldehyde + methylamine + H2O2. It carries out the reaction a primary methyl amine + O2 + H2O = an aldehyde + H2O2 + NH4(+). It catalyses the reaction benzylamine + O2 + H2O = benzaldehyde + H2O2 + NH4(+). The enzyme catalyses dopamine + O2 + H2O = 3,4-dihydroxyphenylacetaldehyde + H2O2 + NH4(+). The catalysed reaction is tyramine + O2 + H2O = (4-hydroxyphenyl)acetaldehyde + H2O2 + NH4(+). It carries out the reaction (R)-noradrenaline + O2 + H2O = (R)-3,4-dihydroxymandelaldehyde + H2O2 + NH4(+). It catalyses the reaction 2-phenylethylamine + O2 + H2O = 2-phenylacetaldehyde + H2O2 + NH4(+). The enzyme catalyses N-acetylputrescine + O2 + H2O = 4-acetamidobutanal + H2O2 + NH4(+). Catalyzes the oxidative deamination of primary and some secondary amines such as neurotransmitters, and exogenous amines including the tertiary amine, neurotoxin 1-methyl-4-phenyl-1,2,3,6-tetrahydropyridine (MPTP), with concomitant reduction of oxygen to hydrogen peroxide and participates in the metabolism of neuroactive and vasoactive amines in the central nervous system and peripheral tissues. Preferentially degrades benzylamine and phenylethylamine. The sequence is that of Amine oxidase [flavin-containing] B from Sus scrofa (Pig).